The chain runs to 240 residues: E3 ubiquitin-protein ligase LubX (240 aa).

U-box domains follow at residues 30–103 (TTPT…QTNY) and 125–198 (EIPD…RKRE).

In terms of processing, ubiquitinated in the presence of host E1 ubiquitin-activating enzyme, E2 ubiquitin-conjugating enzyme and ubiquitin.

It is found in the secreted. The protein localises to the host cell. It catalyses the reaction S-ubiquitinyl-[E2 ubiquitin-conjugating enzyme]-L-cysteine + [acceptor protein]-L-lysine = [E2 ubiquitin-conjugating enzyme]-L-cysteine + N(6)-ubiquitinyl-[acceptor protein]-L-lysine.. Its function is as follows. Effector proteins function to alter host cell physiology and promote bacterial survival in host tissues. This protein is an E3 ubiquitin ligase that interferes with host's ubiquitination pathway. The polypeptide is E3 ubiquitin-protein ligase LubX (lubX) (Legionella pneumophila (strain Paris)).